We begin with the raw amino-acid sequence, 97 residues long: HssA/B-like protein 48 (97 aa).

Disordered stretches follow at residues 1–20 (MTLFASISSISNPSTSSKSS) and 78–97 (GSGYPGNGGMGGGNGSCCGI).

Belongs to the hssA/B family.

The protein is HssA/B-like protein 48 (hssl48) of Dictyostelium discoideum (Social amoeba).